Here is a 146-residue protein sequence, read N- to C-terminus: 3-dehydroquinate dehydratase (146 aa).

Residue Y24 is the Proton acceptor of the active site. The substrate site is built by N73, H79, and D86. The active-site Proton donor is the H99. Residues 100–101 (LS) and R110 contribute to the substrate site.

It belongs to the type-II 3-dehydroquinase family. Homododecamer.

It catalyses the reaction 3-dehydroquinate = 3-dehydroshikimate + H2O. Its pathway is metabolic intermediate biosynthesis; chorismate biosynthesis; chorismate from D-erythrose 4-phosphate and phosphoenolpyruvate: step 3/7. Its function is as follows. Catalyzes a trans-dehydration via an enolate intermediate. This Shewanella oneidensis (strain ATCC 700550 / JCM 31522 / CIP 106686 / LMG 19005 / NCIMB 14063 / MR-1) protein is 3-dehydroquinate dehydratase.